The chain runs to 468 residues: Chromosomal replication initiator protein DnaA (468 aa).

The segment at 1-84 (MSSSLWLQCL…RFEVGSRPVS (84 aa)) is domain I, interacts with DnaA modulators. Positions 80 to 106 (SRPVSAPKPAPTRTPADVAAESSAPAQ) are disordered. A domain II region spans residues 84 to 131 (SAPKPAPTRTPADVAAESSAPAQLQARKPVHKTWDDDPQAIAAINHRS). The tract at residues 132-348 (NMNPKHKFDN…GALNRVIANA (217 aa)) is domain III, AAA+ region. Residues Gly176, Gly178, Lys179, and Thr180 each coordinate ATP. Positions 349-468 (NFTGRPITID…YSNLIRTLSS (120 aa)) are domain IV, binds dsDNA.

This sequence belongs to the DnaA family. In terms of assembly, oligomerizes as a right-handed, spiral filament on DNA at oriC.

It localises to the cytoplasm. Its function is as follows. Plays an essential role in the initiation and regulation of chromosomal replication. ATP-DnaA binds to the origin of replication (oriC) to initiate formation of the DNA replication initiation complex once per cell cycle. Binds the DnaA box (a 9 base pair repeat at the origin) and separates the double-stranded (ds)DNA. Forms a right-handed helical filament on oriC DNA; dsDNA binds to the exterior of the filament while single-stranded (ss)DNA is stabiized in the filament's interior. The ATP-DnaA-oriC complex binds and stabilizes one strand of the AT-rich DNA unwinding element (DUE), permitting loading of DNA polymerase. After initiation quickly degrades to an ADP-DnaA complex that is not apt for DNA replication. Binds acidic phospholipids. The protein is Chromosomal replication initiator protein DnaA of Vibrio parahaemolyticus serotype O3:K6 (strain RIMD 2210633).